The primary structure comprises 186 residues: Tetratricopeptide repeat protein 36 (186 aa).

TPR repeat units follow at residues 48–81, 83–115, and 120–153; these read SKAL…LPDR, SAYN…SGGR, and RQSF…GSPF.

The protein belongs to the TTC36 family.

The protein is Tetratricopeptide repeat protein 36 (Ttc36) of Mus musculus (Mouse).